Here is a 1282-residue protein sequence, read N- to C-terminus: Myosin-1 (1282 aa).

The tract at residues 1 to 30 is disordered; that stretch reads MAISKKAGAKKAGAVSKPPPSKGASSKGGV. The Myosin motor domain occupies 44–723; the sequence is AGVSDMTLLS…TLFALETMRD (680 aa). 137 to 144 contacts ATP; sequence GESGAGKT. The residue at position 365 (Ser365) is a Phosphoserine. The interval 412-494 is actin-binding; it reads VIGVLDIYGF…PGIFSALNDA (83 aa). The tract at residues 569–590 is disordered; that stretch reads LQKLFPDRPDPNSKKRPPTAGD. 2 IQ domains span residues 727 to 747 and 748 to 773; these read HNMA…KEEC and ARRI…YGHQ. A TH1 domain is found at 781–977; the sequence is RRRFSLLGLR…AVSVCSGEPA (197 aa). Residues 973-1073 form a disordered region; it reads SGEPANSVSR…PPPAAVAPSE (101 aa). The span at 1029 to 1058 shows a compositional bias: low complexity; that stretch reads PGSGAAGTARPAAAVGSASAGAGVGATRSA. Pro residues predominate over residues 1059–1068; sequence PRPPPPPPAA. Positions 1074–1135 constitute an SH3 domain; that stretch reads PQVARYKALY…PSNYLELIVQ (62 aa). A disordered region spans residues 1237–1282; that stretch reads AAAAAAGAGANGKGAGAPPAVAAKPVVAPKPAGSNGRAMPPPPPRR. Residues 1252 to 1269 are compositionally biased toward low complexity; it reads GAPPAVAAKPVVAPKPAG.

This sequence belongs to the TRAFAC class myosin-kinesin ATPase superfamily. Myosin family. Post-translationally, phosphorylation of the TEDS site (Ser-365) is required for the polarization of the actin cytoskeleton. Phosphorylation probably activates the myosin-I ATPase activity.

It is found in the cytoplasm. The protein resides in the cytoskeleton. It localises to the actin patch. Functionally, type-I myosin implicated in the organization of the actin cytoskeleton. Required for proper actin cytoskeleton polarization. At the cell cortex, assembles in patch-like structures together with proteins from the actin-polymerizing machinery and promotes actin assembly. Functions as actin nucleation-promoting factor (NPF) for the Arp2/3 complex. This is Myosin-1 (myo1) from Mycosarcoma maydis (Corn smut fungus).